The chain runs to 455 residues: 1-deoxy-D-xylulose 5-phosphate reductoisomerase (455 aa).

Residues threonine 30, glycine 31, serine 32, isoleucine 33, glutamine 63, and asparagine 159 each contribute to the NADPH site. Position 160 (lysine 160) interacts with 1-deoxy-D-xylulose 5-phosphate. NADPH is bound at residue glutamate 161. A Mn(2+)-binding site is contributed by aspartate 185. Positions 186 and 187 each coordinate 1-deoxy-D-xylulose 5-phosphate. Residue glutamate 187 coordinates Mn(2+). The segment covering 205–214 (YATAKQSIQP) has biased composition (polar residues). Residues 205-233 (YATAKQSIQPESVRATDPPSSTTDSPAKT) are disordered. 1-deoxy-D-xylulose 5-phosphate-binding residues include serine 246 and histidine 269. Glycine 275 lines the NADPH pocket. Serine 282, asparagine 287, lysine 288, and glutamate 291 together coordinate 1-deoxy-D-xylulose 5-phosphate. A Mn(2+)-binding site is contributed by glutamate 291.

It belongs to the DXR family. It depends on Mg(2+) as a cofactor. Mn(2+) is required as a cofactor.

It catalyses the reaction 2-C-methyl-D-erythritol 4-phosphate + NADP(+) = 1-deoxy-D-xylulose 5-phosphate + NADPH + H(+). It participates in isoprenoid biosynthesis; isopentenyl diphosphate biosynthesis via DXP pathway; isopentenyl diphosphate from 1-deoxy-D-xylulose 5-phosphate: step 1/6. Its function is as follows. Catalyzes the NADPH-dependent rearrangement and reduction of 1-deoxy-D-xylulose-5-phosphate (DXP) to 2-C-methyl-D-erythritol 4-phosphate (MEP). This chain is 1-deoxy-D-xylulose 5-phosphate reductoisomerase, found in Rhodopirellula baltica (strain DSM 10527 / NCIMB 13988 / SH1).